We begin with the raw amino-acid sequence, 463 residues long: ATP-dependent protease ATPase subunit HslU (463 aa).

ATP is bound by residues Val19, 61 to 66, Asp277, Glu341, and Arg413; that span reads GVGKTE.

Belongs to the ClpX chaperone family. HslU subfamily. As to quaternary structure, a double ring-shaped homohexamer of HslV is capped on each side by a ring-shaped HslU homohexamer. The assembly of the HslU/HslV complex is dependent on binding of ATP.

Its subcellular location is the cytoplasm. ATPase subunit of a proteasome-like degradation complex; this subunit has chaperone activity. The binding of ATP and its subsequent hydrolysis by HslU are essential for unfolding of protein substrates subsequently hydrolyzed by HslV. HslU recognizes the N-terminal part of its protein substrates and unfolds these before they are guided to HslV for hydrolysis. The chain is ATP-dependent protease ATPase subunit HslU from Shouchella clausii (strain KSM-K16) (Alkalihalobacillus clausii).